Reading from the N-terminus, the 233-residue chain is UPF0502 protein Mpe_A1449 (233 aa).

It belongs to the UPF0502 family.

This chain is UPF0502 protein Mpe_A1449, found in Methylibium petroleiphilum (strain ATCC BAA-1232 / LMG 22953 / PM1).